The sequence spans 432 residues: E3 ubiquitin-protein ligase RNF135 (432 aa).

The RING-type zinc-finger motif lies at 21–63 (CIICQGLLDWPATLPCGHSFCRHCLEALWGARDARRWACPTCR). The disordered stretch occupies residues 95-121 (GSDPAHCPCPGSSSLSSAAARPRRRPE). The segment covering 102–114 (PCPGSSSLSSAAA) has biased composition (low complexity). Coiled-coil stretches lie at residues 121–156 (ELQRVAVEKSITEVAQELTELVEHLVDIVRSLQNQR) and 191–216 (DTAAGKIRDILHDLEEIQEKLQESVT). The region spanning 241–432 (PDQSHPALRR…NYLIIKQVKV (192 aa)) is the B30.2/SPRY domain.

Homodimer. Interacts (homodimer) with RIGI (double-stranded RNA-bound oligomeric form); involved in both RIGI ubiquitination, oligomerization into filaments associated with viral RNAs and the bridging of these filaments. Interacts with UBE2D3 and UBE2N; E2 ubiquitin ligases involved in RNF135-mediated ubiquitination of RIGI and activation of the RIG-I signaling pathway. Interacts with PCBP2. Post-translationally, (Microbial infection) Cleaved and inactivated by hepatitis C virus NS3/NS4A. As to expression, expressed in skeletal muscle, spleen, kidney, placenta, prostate, stomach, thyroid and tongue. Also weakly expressed in heart, thymus, liver and lung.

It is found in the cytoplasm. Its subcellular location is the stress granule. It carries out the reaction S-ubiquitinyl-[E2 ubiquitin-conjugating enzyme]-L-cysteine + [acceptor protein]-L-lysine = [E2 ubiquitin-conjugating enzyme]-L-cysteine + N(6)-ubiquitinyl-[acceptor protein]-L-lysine.. It participates in protein modification; protein ubiquitination. In terms of biological role, E2-dependent E3 ubiquitin-protein ligase that functions as a RIGI coreceptor in the sensing of viral RNAs in cell cytoplasm and the activation of the antiviral innate immune response. Together with the UBE2D3, UBE2N and UB2V1 E2 ligases, catalyzes the 'Lys-63'-linked polyubiquitination of RIGI oligomerized on viral RNAs, an essential step in the activation of the RIG-I signaling pathway. Through a ubiquitin-independent parallel mechanism, which consists in bridging RIGI filaments forming on longer viral RNAs, further activates the RIG-I signaling pathway. This second mechanism that synergizes with the ubiquitin-dependent one would thereby allow an RNA length-dependent regulation of the RIG-I signaling pathway. Associated with the E2 ligase UBE2N, also constitutively synthesizes unanchored 'Lys-63'-linked polyubiquitin chains that may also activate the RIG-I signaling pathway. The sequence is that of E3 ubiquitin-protein ligase RNF135 from Homo sapiens (Human).